We begin with the raw amino-acid sequence, 195 residues long: Phosphoheptose isomerase (195 aa).

The SIS domain occupies 36–195 (VSKVLQSGNT…IVEYNLFKME (160 aa)). 51–53 (NGG) contributes to the substrate binding site. Zn(2+) is bound by residues histidine 60 and glutamate 64. Substrate-binding positions include glutamate 64, 95–96 (ND), 121–123 (STS), serine 126, and glutamine 173. The Zn(2+) site is built by glutamine 173 and histidine 181.

Belongs to the SIS family. GmhA subfamily. Zn(2+) is required as a cofactor.

It is found in the cytoplasm. The catalysed reaction is 2 D-sedoheptulose 7-phosphate = D-glycero-alpha-D-manno-heptose 7-phosphate + D-glycero-beta-D-manno-heptose 7-phosphate. The protein operates within carbohydrate biosynthesis; D-glycero-D-manno-heptose 7-phosphate biosynthesis; D-glycero-alpha-D-manno-heptose 7-phosphate and D-glycero-beta-D-manno-heptose 7-phosphate from sedoheptulose 7-phosphate: step 1/1. Catalyzes the isomerization of sedoheptulose 7-phosphate in D-glycero-D-manno-heptose 7-phosphate. This is Phosphoheptose isomerase from Leptospira borgpetersenii serovar Hardjo-bovis (strain JB197).